The chain runs to 341 residues: N-acetyl-gamma-glutamyl-phosphate reductase (341 aa).

The active site involves Cys-151.

This sequence belongs to the NAGSA dehydrogenase family. Type 1 subfamily.

The protein resides in the cytoplasm. It carries out the reaction N-acetyl-L-glutamate 5-semialdehyde + phosphate + NADP(+) = N-acetyl-L-glutamyl 5-phosphate + NADPH + H(+). It functions in the pathway amino-acid biosynthesis; L-arginine biosynthesis; N(2)-acetyl-L-ornithine from L-glutamate: step 3/4. In terms of biological role, catalyzes the NADPH-dependent reduction of N-acetyl-5-glutamyl phosphate to yield N-acetyl-L-glutamate 5-semialdehyde. This chain is N-acetyl-gamma-glutamyl-phosphate reductase, found in Chlorobaculum tepidum (strain ATCC 49652 / DSM 12025 / NBRC 103806 / TLS) (Chlorobium tepidum).